The chain runs to 142 residues: Transcriptional regulator MraZ (142 aa).

SpoVT-AbrB domains are found at residues Ala-5–Glu-51 and Ala-77–Thr-120.

It belongs to the MraZ family. In terms of assembly, forms oligomers.

The protein localises to the cytoplasm. It is found in the nucleoid. This Burkholderia cenocepacia (strain HI2424) protein is Transcriptional regulator MraZ.